The chain runs to 357 residues: 3-isopropylmalate dehydrogenase (357 aa).

77-90 (GPKWDTLPGEKRPE) serves as a coordination point for NAD(+). Residues R97, R107, R136, and D224 each contribute to the substrate site. 3 residues coordinate Mg(2+): D224, D248, and D252. Residue 282–294 (GSAPDIAGQDLAN) coordinates NAD(+).

Belongs to the isocitrate and isopropylmalate dehydrogenases family. LeuB type 1 subfamily. As to quaternary structure, homodimer. Mg(2+) is required as a cofactor. Mn(2+) serves as cofactor.

The protein localises to the cytoplasm. It catalyses the reaction (2R,3S)-3-isopropylmalate + NAD(+) = 4-methyl-2-oxopentanoate + CO2 + NADH. Its pathway is amino-acid biosynthesis; L-leucine biosynthesis; L-leucine from 3-methyl-2-oxobutanoate: step 3/4. Its function is as follows. Catalyzes the oxidation of 3-carboxy-2-hydroxy-4-methylpentanoate (3-isopropylmalate) to 3-carboxy-4-methyl-2-oxopentanoate. The product decarboxylates to 4-methyl-2 oxopentanoate. In Clostridium acetobutylicum (strain ATCC 824 / DSM 792 / JCM 1419 / IAM 19013 / LMG 5710 / NBRC 13948 / NRRL B-527 / VKM B-1787 / 2291 / W), this protein is 3-isopropylmalate dehydrogenase.